A 1172-amino-acid polypeptide reads, in one-letter code: DNA-directed RNA polymerase subunit beta (1172 aa).

This sequence belongs to the RNA polymerase beta chain family. In terms of assembly, the RNAP catalytic core consists of 2 alpha, 1 beta, 1 beta' and 1 omega subunit. When a sigma factor is associated with the core the holoenzyme is formed, which can initiate transcription.

It carries out the reaction RNA(n) + a ribonucleoside 5'-triphosphate = RNA(n+1) + diphosphate. In terms of biological role, DNA-dependent RNA polymerase catalyzes the transcription of DNA into RNA using the four ribonucleoside triphosphates as substrates. The polypeptide is DNA-directed RNA polymerase subunit beta (Pseudothermotoga lettingae (strain ATCC BAA-301 / DSM 14385 / NBRC 107922 / TMO) (Thermotoga lettingae)).